A 334-amino-acid chain; its full sequence is L-lactate dehydrogenase B chain (334 aa).

NAD(+)-binding positions include 30 to 58 and Arg100; that span reads GQVG…MEDR. Substrate is bound by residues Arg107, Asn139, and Arg170. Asn139 lines the NAD(+) pocket. The Proton acceptor role is filled by His194. Thr249 provides a ligand contact to substrate.

It belongs to the LDH/MDH superfamily. LDH family. As to quaternary structure, homotetramer.

Its subcellular location is the cytoplasm. It catalyses the reaction (S)-lactate + NAD(+) = pyruvate + NADH + H(+). It participates in fermentation; pyruvate fermentation to lactate; (S)-lactate from pyruvate: step 1/1. Its function is as follows. Interconverts simultaneously and stereospecifically pyruvate and lactate with concomitant interconversion of NADH and NAD(+). The sequence is that of L-lactate dehydrogenase B chain (ldhb) from Fundulus heteroclitus (Killifish).